A 555-amino-acid chain; its full sequence is Bicyclo-germacrene synthase (555 aa).

Positions 311 and 315 each coordinate Mg(2+). A DDXXD motif motif is present at residues Asp-311–Glu-315. Homodimerization regions lie at residues Tyr-316–Leu-322 and Glu-392–Gly-429. 2 residues coordinate Mg(2+): Asp-459 and Glu-467.

Belongs to the terpene synthase family. Homodimer. Requires Mn(2+) as cofactor. Mg(2+) serves as cofactor. In terms of tissue distribution, expressed in peltate glandular trichomes. Present at low levels in flowers, leaves and stems.

The enzyme catalyses (2E,6E)-farnesyl diphosphate = bicyclogermacrene + diphosphate. It carries out the reaction (2E)-geranyl diphosphate = terpinolene + diphosphate. The catalysed reaction is (2E)-geranyl diphosphate = (4R)-limonene + diphosphate. It catalyses the reaction (2E)-geranyl diphosphate + H2O = (2E)-geraniol + diphosphate. The enzyme catalyses (2E,6E)-farnesyl diphosphate = allo-aromadendrene + diphosphate. It participates in secondary metabolite biosynthesis; terpenoid biosynthesis. Involved in the biosynthesis of phenolic sesquiterpenes natural products. Sesquiterpene synthase converting (2E,6E)-farnesyl diphosphate (FPP) to alloaromadendrene and bicyclo-germacrene. The product formation is dependent on the metal ions present and in presence of manganese, bicyclo-germacrene is greatly favored while both alloaromadendrene and bicyclo-germacrene are produced in equivalent amounts in the presence of magnesium. Can also convert geranyl diphosphate (GPP) to terpinolene, limonene and geraniol, and this conversion is not affected by the presence of magnesium or manganese. This chain is Bicyclo-germacrene synthase (TPS4), found in Origanum vulgare (Wild marjoram).